The following is a 215-amino-acid chain: Transcription elongation factor A protein-like 4 (215 aa).

M1 carries the N-acetylmethionine modification. Residues 1-133 (MEKLYSENEG…RKAKRKTNKG (133 aa)) form a disordered region. A phosphoserine mark is found at S6, S88, and S102. Residues 25–102 (QDERKPEVTC…KPEIEGKPES (78 aa)) show a composition bias toward basic and acidic residues.

This sequence belongs to the TFS-II family. TFA subfamily.

It localises to the nucleus. May be involved in transcriptional regulation. The polypeptide is Transcription elongation factor A protein-like 4 (TCEAL4) (Homo sapiens (Human)).